The primary structure comprises 287 residues: Merozoite surface protein 2 (287 aa).

A signal peptide spans 1–20; that stretch reads MKVIKTLSIINFFIFVTFNI. N-linked (GlcNAc...) asparagine glycans are attached at residues N22 and N36. Residues 42 to 248 are disordered; it reads SMTESNPPTG…DSQKECTDGN (207 aa). The segment at 44 to 213 is polymorphic region; sequence TESNPPTGAS…EQTESPELQS (170 aa). The segment covering 54–112 has biased composition (gly residues); that stretch reads GSAGGSAGGSAGGSAGGSAGGSAGGSAGGSAGGSAGGSAGGSAGGSAGGSAGSGDGNGA. A run of 12 repeats spans residues 55–58, 59–62, 63–66, 67–70, 71–74, 75–78, 79–82, 83–86, 87–90, 91–94, 95–98, and 99–102. Residues 55-102 are 12 X 4 AA tandem repeats of S-A-G-G; sequence SAGGSAGGSAGGSAGGSAGGSAGGSAGGSAGGSAGGSAGGSAGGSAGG. Low complexity predominate over residues 121 to 149; sequence SPSTPATTTTTTTTNDAEASTSTSSENPN. 2 stretches are compositionally biased toward polar residues: residues 150–180 and 187–215; these read HNNAETNQANKETQNNSNVQQDSQTKSNVPP and KSPTAQPEQAENSAPTAEQTESPELQSAP. N-linked (GlcNAc...) asparagine glycosylation is present at N164. Residue N236 is glycosylated (N-linked (GlcNAc...) asparagine). The cysteines at positions 244 and 252 are disulfide-linked. N-linked (GlcNAc...) asparagine glycosylation is found at N260 and N261. N261 carries GPI-anchor amidated asparagine lipidation. Positions 262–287 are cleaved as a propeptide — removed in mature form; it reads SSNIASINKFVVLISATLVLSFAIFI.

The protein resides in the cell membrane. In terms of biological role, may play a role in the merozoite attachment to the erythrocyte. This is Merozoite surface protein 2 from Plasmodium falciparum (isolate FCR-3 / Gambia).